The sequence spans 59 residues: Large ribosomal subunit protein bL35 (59 aa).

Disordered regions lie at residues 1–22 and 30–49; these read MKVK…IKRK and APHK…TVSA. Residues 30 to 43 show a composition bias toward basic residues; it reads APHKTTKQKRHLRK.

The protein belongs to the bacterial ribosomal protein bL35 family.

The protein is Large ribosomal subunit protein bL35 (rpmI) of Mycoplasma pneumoniae (strain ATCC 29342 / M129 / Subtype 1) (Mycoplasmoides pneumoniae).